A 56-amino-acid polypeptide reads, in one-letter code: Large ribosomal subunit protein bL33 (56 aa).

Belongs to the bacterial ribosomal protein bL33 family.

This is Large ribosomal subunit protein bL33 from Actinobacillus succinogenes (strain ATCC 55618 / DSM 22257 / CCUG 43843 / 130Z).